We begin with the raw amino-acid sequence, 152 residues long: Diamine acetyltransferase (152 aa).

Positions Phe-5–Asp-152 constitute an N-acetyltransferase domain. The active-site Proton donor is Tyr-127.

This sequence belongs to the acetyltransferase family. In terms of assembly, homotetramer.

It is found in the cytoplasm. The enzyme catalyses an alkane-alpha,omega-diamine + acetyl-CoA = an N-acetylalkane-alpha,omega-diamine + CoA + H(+). Its pathway is amine and polyamine degradation; putrescine degradation; N-acetylputrescine from putrescine: step 1/1. Its function is as follows. Enzyme which catalyzes the acetylation of polyamines. Displays higher substrate specificity for spermine than for spermidine. May function to acetylate host-derived polyamines, thus alleviating the necessity for de novo synthesis of these molecules. The chain is Diamine acetyltransferase from Cryptosporidium parvum (strain Iowa II).